The primary structure comprises 148 residues: Large ribosomal subunit protein bL9 (148 aa).

The protein belongs to the bacterial ribosomal protein bL9 family.

Functionally, binds to the 23S rRNA. This is Large ribosomal subunit protein bL9 from Bacillus cereus (strain G9842).